The chain runs to 116 residues: Ribosome-binding factor A (116 aa).

It belongs to the RbfA family. Monomer. Binds 30S ribosomal subunits, but not 50S ribosomal subunits or 70S ribosomes.

It localises to the cytoplasm. Its function is as follows. One of several proteins that assist in the late maturation steps of the functional core of the 30S ribosomal subunit. Associates with free 30S ribosomal subunits (but not with 30S subunits that are part of 70S ribosomes or polysomes). Required for efficient processing of 16S rRNA. May interact with the 5'-terminal helix region of 16S rRNA. The protein is Ribosome-binding factor A of Clostridium botulinum (strain Eklund 17B / Type B).